The following is a 210-amino-acid chain: Vacuolar protein sorting-associated protein 28 homolog 2 (210 aa).

One can recognise a VPS28 N-terminal domain in the interval 1 to 99 (MMEVKLWNDK…VTSGLPATVE (99 aa)). The 97-residue stretch at 109 to 205 (SNSASIVAEC…SSYNSFMAAL (97 aa)) folds into the VPS28 C-terminal domain.

The protein belongs to the VPS28 family. As to quaternary structure, component of the endosomal sorting required for transport complex I (ESCRT-I), composed of ELC, VPS28 and VPS37. Interacts with ELC.

The protein localises to the endosome. Functionally, component of the ESCRT-I complex (endosomal sorting complex required for transport I), a regulator of vesicular trafficking process. Required for the sorting of endocytic ubiquitinated cargos into multivesicular bodies (MVBs). Mediates the association to the ESCRT-0 complex. This Arabidopsis thaliana (Mouse-ear cress) protein is Vacuolar protein sorting-associated protein 28 homolog 2 (VPS28-2).